A 1100-amino-acid polypeptide reads, in one-letter code: MAEQTQLAPAAFHLPDLVAIQRNSFRWFLEEGLIEELESFSPITDYTGKLELHFLGKQYKLKRPKYDVDEAKRRDGTYSVQMYVPTRLINKETGEIKEQEVFIGDLPLMTDRGTFIINGAERVIVNQIVRSPGVYYKSERDKNGRLTHNASLIPNRGAWLKFETDKNGLVWVRIDKTRKLSAQVLLKALGLSDNEIYDKLRHPEYYQKTIDKEGQFSEDEALMELYRKLRPGEPPTVSGGQQLLESRFFDPKRYDLGRVGRYKLNKKLGLNVADTVRTLTSEDILAAIDYLINLELDLGGCEVDDIDHLGNRRVRSVGELLQNQVRVGLNRLERIIRERMTVSDSDSLSPASLVNPKPLVAAIKEFFGSSQLSQFMDQTNPLAELTHKRRLSALGPGGLTRERAGFAVRDIHPSHYGRICPIETPEGPNAGLIGSLATHARVNDYGFIETPFWRVEEGRVRKDLAPVYMTADQEDDLRVAPGDVATDDAGYILGTTIPVRYRQDFTTTTPERVDYVALSPVQIISVATSLIPFLEHDDANRALMSSNMQRQAVPLLRPERPLVGTGLEPQAARDSGMVITSPVDGTISYVDATHIEVTADTGEKYGYALQKYQRSNQDTCLNQRPIVFEGDRGQRGQVIADGSATEKGELALGQNILVAYMPWEGYNYEDAILISERLVYDDVYTSIHIEKFEIEARQTKLGPEEITREIPNVGEDALRQLDENGIIRVGAWVESGDILVGKVTPKGESDQPPEEKLLRAIFGEKARDVRDNSLRVPNGEKGRVVDVRLFTREQGDELPPGANMVVRVYVAQKRKIQVGDKMAGRHGNKGIISRILPCEDMPYLPDGTPLDIVLNPLGVPSRMNVGQVFECMLGWAGQLLDARFKVTPFDEMYGAEASRLTVNAKLSEAREQTGQPWVFSDDEPGKIQVYDGRTGEPFDRPVTVGRAYMLKLVHLVDDKIHARSTGPYSLVTQQPLGGKAQQGGQRFGEMEVWALEAYGAAYILQELLTVKSDDMQGRNEALNAIVKGKAIPRPGTPESFKVLMRELQSLCLDIAVYKASTEDYEEDKEVDLMADVNQRRTPSRPTYESMSVGDIDDDDD.

The segment at 1064 to 1100 (YEEDKEVDLMADVNQRRTPSRPTYESMSVGDIDDDDD) is disordered. The span at 1079–1089 (RRTPSRPTYES) shows a compositional bias: polar residues.

The protein belongs to the RNA polymerase beta chain family. In terms of assembly, in cyanobacteria the RNAP catalytic core is composed of 2 alpha, 1 beta, 1 beta', 1 gamma and 1 omega subunit. When a sigma factor is associated with the core the holoenzyme is formed, which can initiate transcription.

The catalysed reaction is RNA(n) + a ribonucleoside 5'-triphosphate = RNA(n+1) + diphosphate. Functionally, DNA-dependent RNA polymerase catalyzes the transcription of DNA into RNA using the four ribonucleoside triphosphates as substrates. In Synechococcus sp. (strain ATCC 27144 / PCC 6301 / SAUG 1402/1) (Anacystis nidulans), this protein is DNA-directed RNA polymerase subunit beta.